Reading from the N-terminus, the 448-residue chain is Asparagine--tRNA ligase (448 aa).

It belongs to the class-II aminoacyl-tRNA synthetase family. As to quaternary structure, homodimer.

It is found in the cytoplasm. The catalysed reaction is tRNA(Asn) + L-asparagine + ATP = L-asparaginyl-tRNA(Asn) + AMP + diphosphate + H(+). In Streptococcus pyogenes serotype M12 (strain MGAS9429), this protein is Asparagine--tRNA ligase.